Here is a 587-residue protein sequence, read N- to C-terminus: uncharacterized protein (587 aa).

The 366-residue stretch at 61–426 folds into the YcaO domain; that stretch reads GKGASKKAAL…DLPNWHHDAE (366 aa).

This is an uncharacterized protein from Haemophilus influenzae (strain ATCC 51907 / DSM 11121 / KW20 / Rd).